Reading from the N-terminus, the 278-residue chain is Large ribosomal subunit protein uL2 (278 aa).

Disordered stretches follow at residues 27–57 and 224–278; these read STPE…QGGG and VAMN…NKKR. Basic residues predominate over residues 258-278; it reads RSPKKASSKYIVRRRKTNKKR.

The protein belongs to the universal ribosomal protein uL2 family. As to quaternary structure, part of the 50S ribosomal subunit. Forms a bridge to the 30S subunit in the 70S ribosome.

One of the primary rRNA binding proteins. Required for association of the 30S and 50S subunits to form the 70S ribosome, for tRNA binding and peptide bond formation. It has been suggested to have peptidyltransferase activity; this is somewhat controversial. Makes several contacts with the 16S rRNA in the 70S ribosome. This chain is Large ribosomal subunit protein uL2, found in Streptomyces avermitilis (strain ATCC 31267 / DSM 46492 / JCM 5070 / NBRC 14893 / NCIMB 12804 / NRRL 8165 / MA-4680).